The sequence spans 375 residues: Chaperone protein DnaJ (375 aa).

Residues 5–69 enclose the J domain; that stretch reads DYYEILGIDK…QKRAQYDQFG (65 aa). The segment at 131–213 adopts a CR-type zinc-finger fold; sequence GKETDIEIPK…CGGSGTVQKN (83 aa). The Zn(2+) site is built by Cys-144, Cys-147, Cys-161, Cys-164, Cys-187, Cys-190, Cys-201, and Cys-204. CXXCXGXG motif repeat units follow at residues 144-151, 161-168, 187-194, and 201-208; these read CDTCNGSG, CSHCHGSG, CNYCQGTG, and CNTCGGSG.

This sequence belongs to the DnaJ family. In terms of assembly, homodimer. Zn(2+) is required as a cofactor.

It is found in the cytoplasm. In terms of biological role, participates actively in the response to hyperosmotic and heat shock by preventing the aggregation of stress-denatured proteins and by disaggregating proteins, also in an autonomous, DnaK-independent fashion. Unfolded proteins bind initially to DnaJ; upon interaction with the DnaJ-bound protein, DnaK hydrolyzes its bound ATP, resulting in the formation of a stable complex. GrpE releases ADP from DnaK; ATP binding to DnaK triggers the release of the substrate protein, thus completing the reaction cycle. Several rounds of ATP-dependent interactions between DnaJ, DnaK and GrpE are required for fully efficient folding. Also involved, together with DnaK and GrpE, in the DNA replication of plasmids through activation of initiation proteins. The chain is Chaperone protein DnaJ from Oceanobacillus iheyensis (strain DSM 14371 / CIP 107618 / JCM 11309 / KCTC 3954 / HTE831).